We begin with the raw amino-acid sequence, 179 residues long: Adenine phosphoribosyltransferase (179 aa).

Belongs to the purine/pyrimidine phosphoribosyltransferase family. Homodimer.

Its subcellular location is the cytoplasm. It catalyses the reaction AMP + diphosphate = 5-phospho-alpha-D-ribose 1-diphosphate + adenine. Its pathway is purine metabolism; AMP biosynthesis via salvage pathway; AMP from adenine: step 1/1. In terms of biological role, catalyzes a salvage reaction resulting in the formation of AMP, that is energically less costly than de novo synthesis. This is Adenine phosphoribosyltransferase from Gluconobacter oxydans (strain 621H) (Gluconobacter suboxydans).